Consider the following 175-residue polypeptide: Protein-export protein SecB (175 aa).

This sequence belongs to the SecB family. Homotetramer, a dimer of dimers. One homotetramer interacts with 1 SecA dimer.

The protein localises to the cytoplasm. One of the proteins required for the normal export of preproteins out of the cell cytoplasm. It is a molecular chaperone that binds to a subset of precursor proteins, maintaining them in a translocation-competent state. It also specifically binds to its receptor SecA. The polypeptide is Protein-export protein SecB (Anaplasma marginale (strain Florida)).